The chain runs to 159 residues: MAETLSSLQDLKAATAVPTEEAPVYAQKLDAFGRAYATGKRKDAVARVWIKPGSGKVTVNGRPLDVYFARPVLRMILQQPLGVAKRVDQYDLMVTVAGGGLSGQAGAVRHGLAKALVNYEPELRSALKKEGFLTRDSRTVERKKYGKKKARRSFQFSKR.

Belongs to the universal ribosomal protein uS9 family.

The sequence is that of Small ribosomal subunit protein uS9 from Beijerinckia indica subsp. indica (strain ATCC 9039 / DSM 1715 / NCIMB 8712).